Reading from the N-terminus, the 383-residue chain is ATP phosphoribosyltransferase regulatory subunit (383 aa).

Belongs to the class-II aminoacyl-tRNA synthetase family. HisZ subfamily. As to quaternary structure, heteromultimer composed of HisG and HisZ subunits.

The protein localises to the cytoplasm. It functions in the pathway amino-acid biosynthesis; L-histidine biosynthesis; L-histidine from 5-phospho-alpha-D-ribose 1-diphosphate: step 1/9. Its function is as follows. Required for the first step of histidine biosynthesis. May allow the feedback regulation of ATP phosphoribosyltransferase activity by histidine. In Cupriavidus necator (strain ATCC 17699 / DSM 428 / KCTC 22496 / NCIMB 10442 / H16 / Stanier 337) (Ralstonia eutropha), this protein is ATP phosphoribosyltransferase regulatory subunit.